The chain runs to 212 residues: Transcription antitermination protein NusB (212 aa).

The protein belongs to the NusB family.

In terms of biological role, involved in transcription antitermination. Required for transcription of ribosomal RNA (rRNA) genes. Binds specifically to the boxA antiterminator sequence of the ribosomal RNA (rrn) operons. In Gloeothece citriformis (strain PCC 7424) (Cyanothece sp. (strain PCC 7424)), this protein is Transcription antitermination protein NusB.